A 216-amino-acid polypeptide reads, in one-letter code: Cytidylate kinase (216 aa).

An ATP-binding site is contributed by 7 to 15; it reads GPSGTGKST.

This sequence belongs to the cytidylate kinase family. Type 1 subfamily.

Its subcellular location is the cytoplasm. It catalyses the reaction CMP + ATP = CDP + ADP. It carries out the reaction dCMP + ATP = dCDP + ADP. The chain is Cytidylate kinase from Chlamydia caviae (strain ATCC VR-813 / DSM 19441 / 03DC25 / GPIC) (Chlamydophila caviae).